We begin with the raw amino-acid sequence, 92 residues long: MPRSLKKGPFIDLHLLKKVEKAVESGDKKPVKTWSRRSMIIPNMIGLTIAVHNGRQHVPVFVTEEMIGHKLGEFAPTRTYRGHAADKKAKKR.

The protein belongs to the universal ribosomal protein uS19 family.

Protein S19 forms a complex with S13 that binds strongly to the 16S ribosomal RNA. The sequence is that of Small ribosomal subunit protein uS19 from Aeromonas hydrophila subsp. hydrophila (strain ATCC 7966 / DSM 30187 / BCRC 13018 / CCUG 14551 / JCM 1027 / KCTC 2358 / NCIMB 9240 / NCTC 8049).